We begin with the raw amino-acid sequence, 229 residues long: Uracil-DNA glycosylase (229 aa).

Aspartate 64 functions as the Proton acceptor in the catalytic mechanism.

Belongs to the uracil-DNA glycosylase (UDG) superfamily. UNG family.

The protein localises to the cytoplasm. The enzyme catalyses Hydrolyzes single-stranded DNA or mismatched double-stranded DNA and polynucleotides, releasing free uracil.. In terms of biological role, excises uracil residues from the DNA which can arise as a result of misincorporation of dUMP residues by DNA polymerase or due to deamination of cytosine. This chain is Uracil-DNA glycosylase, found in Klebsiella pneumoniae subsp. pneumoniae (strain ATCC 700721 / MGH 78578).